A 192-amino-acid polypeptide reads, in one-letter code: MSIENTLPTYQSLALALNQQAVALTPAEMHGLISGMLCGGSKDDGWRALVHDLTNEGIAFSQALGLPLQQLHEATQEALENEGFMFQLLIPEGEEVTVFDRADALSGWVNHFLLGLGMLQPKLAQVKDEVGEAIDDLRNIAQLGYDEDEDQEELAQSLEEVIEYVRVAAILCHIEFTQEKPTAPEIRKPTLH.

The protein belongs to the UPF0149 family.

The protein is UPF0149 protein YE3397 of Yersinia enterocolitica serotype O:8 / biotype 1B (strain NCTC 13174 / 8081).